We begin with the raw amino-acid sequence, 447 residues long: D-ribitol-5-phosphate cytidylyltransferase (447 aa).

Belongs to the IspD/TarI cytidylyltransferase family. IspD subfamily. As to quaternary structure, homodimer.

The protein localises to the cytoplasm. It localises to the cytosol. It carries out the reaction D-ribitol 5-phosphate + CTP + H(+) = CDP-L-ribitol + diphosphate. The enzyme catalyses D-ribose 5-phosphate + CTP + H(+) = CDP-D-ribose + diphosphate. The catalysed reaction is D-ribulose 5-phosphate + CTP + H(+) = CDP-D-ribulose + diphosphate. It participates in protein modification; protein glycosylation. In terms of biological role, cytidylyltransferase required for protein O-linked mannosylation. Catalyzes the formation of CDP-ribitol nucleotide sugar from D-ribitol 5-phosphate. CDP-ribitol is a substrate of FKTN during the biosynthesis of the phosphorylated O-mannosyl trisaccharide (N-acetylgalactosamine-beta-3-N-acetylglucosamine-beta-4-(phosphate-6-)mannose), a carbohydrate structure present in alpha-dystroglycan (DAG1), which is required for binding laminin G-like domain-containing extracellular proteins with high affinity. Shows activity toward other pentose phosphate sugars and mediates formation of CDP-ribulose or CDP-ribose using CTP and ribulose-5-phosphate or ribose-5-phosphate, respectively. Not involved in dolichol production. The polypeptide is D-ribitol-5-phosphate cytidylyltransferase (Crppa) (Rattus norvegicus (Rat)).